The sequence spans 1097 residues: RecBCD enzyme subunit RecC (1097 aa).

This sequence belongs to the RecC family. As to quaternary structure, heterotrimer of RecB, RecC and RecD. All subunits contribute to DNA-binding.

Its function is as follows. A helicase/nuclease that prepares dsDNA breaks (DSB) for recombinational DNA repair. Binds to DSBs and unwinds DNA via a highly rapid and processive ATP-dependent bidirectional helicase activity. Holoenzyme degrades any linearized DNA that is unable to undergo homologous recombination. In the holoenzyme this subunit recognizes the wild-type Chi sequence, and when added to isolated RecB increases its ATP-dependent helicase processivity. Unlike the case in E.coli, suppresses RecA-dependent homologous recombination, is instead required for single-strand annealing pathway repair of DSB. This chain is RecBCD enzyme subunit RecC, found in Mycobacterium tuberculosis (strain CDC 1551 / Oshkosh).